Consider the following 73-residue polypeptide: Large ribosomal subunit protein bL28 (73 aa).

Belongs to the bacterial ribosomal protein bL28 family.

The chain is Large ribosomal subunit protein bL28 from Anaeromyxobacter sp. (strain Fw109-5).